Reading from the N-terminus, the 410-residue chain is Beta-arrestin-2 (410 aa).

Tyr48 bears the Phosphotyrosine mark. 2 positions are modified to hydroxyproline; by PHD2: Pro176 and Pro181. The interval 241–410 is interaction with TRAF6; the sequence is ADICLFSTAQ…KDDDCDDQFC (170 aa). Phosphoserine is present on Ser361. Positions 378–410 are interaction with AP2B1; the sequence is DTNYATDDDIVFEDFARLRLKGMKDDDCDDQFC. A Phosphothreonine; by CaMK2 modification is found at Thr383. A [DE]-X(1,2)-F-X-X-[FL]-X-X-X-R motif motif is present at residues 386–396; that stretch reads DIVFEDFARLR.

Belongs to the arrestin family. Homooligomer; the self-association is mediated by InsP6-binding. Heterooligomer with ARRB1; the association is mediated by InsP6-binding. Interacts with ADRB2 and CHRM2. Interacts with PDE4A. Interacts with PDE4D. Interacts with MAPK10, MAPK1 and MAPK3. Interacts with DRD2. Interacts with FSHR. Interacts with CLTC. Interacts with HTR2C. Interacts with CCR5. Interacts with CXCR4. Interacts with SRC. Interacts with DUSP16; the interaction is interrupted by stimulation of AGTR1 and activation of MAPK10. Interacts with CHUK; the interaction is enhanced stimulation of ADRB2. Interacts with RELA. Interacts with MDM2; the interaction is enhanced by activation of GPCRs. Interacts with SLC9A5. Interacts with TRAF6. Interacts with IGF1R. Interacts with ENG. Interacts with KIR2DL1, KIR2DL3 and KIR2DL4. Interacts with LDLR. Interacts with AP2B1. Interacts with C5AR1. Interacts with RAF1. Interacts with MAP2K1. Interacts with MAPK1. Interacts with MAPK10; the interaction enhances MAPK10 activation by MAP3K5. Interacts with MAP2K4; the interaction is enhanced by presence of MAP3K5 and MAPK10. Interacts with MAP3K5. Interacts with AKT1. Interacts with IKBKB and MAP3K14. Interacts with SMO (activated). Interacts with GSK3A and GSK3B. Associates with protein phosphatase 2A (PP2A). Interacts with CXCR4; the interaction is dependent on C-terminal phosphorylation of CXCR4 and allows activation of MAPK1 and MAPK3. Interacts with GPR143. Interacts with HCK and CXCR1 (phosphorylated). Interacts with ACKR3 and ACKR4. Interacts with ARRDC1; the interaction is direct. Interacts with GPR61, GPR62 and GPR135. Interacts (via NACHT and LRR domains) with NLRP3; this interaction is direct and inducible by omega-3 polyunsaturated fatty acids (PUFAs). Interacts with FFAR4 (via C-terminus); this interaction is stimulated by long-chain fatty acids (LCFAs). Interacts with GPR35. Interacts with GPR84. Interacts with TIGIT; this interaction inhibits the NF-kappa-B pathway. Interacts with TGFBR3. Post-translationally, phosphorylated at Thr-383 in the cytoplasm; probably dephosphorylated at the plasma membrane. The phosphorylation does not regulate internalization and recycling of ADRB2, interaction with clathrin or AP2B1. The ubiquitination status appears to regulate the formation and trafficking of beta-arrestin-GPCR complexes and signaling. Ubiquitination appears to occur GPCR-specific. Ubiquitinated by MDM2; the ubiquitination is required for rapid internalization of ADRB2. Deubiquitinated by USP33; the deubiquitination leads to a dissociation of the beta-arrestin-GPCR complex. Stimulation of a class A GPCR, such as ADRB2, induces transient ubiquitination and subsequently promotes association with USP33. Stimulation of a class B GPCR promotes a sustained ubiquitination. Deubiquitinated by USP20; allowing USP20 to deubiquitinate TRAF6 leading to inhibition of NF-kappa-B signaling. In terms of processing, hydroxylation by PHD2 modulates the rate of internalization by slowing down recruitment to the plasma membrane and inhibiting subsequent co-internalization with class A receptors. As to expression, predominantly localized in neuronal tissues and in the spleen.

The protein localises to the cytoplasm. It localises to the nucleus. Its subcellular location is the cell membrane. The protein resides in the membrane. It is found in the clathrin-coated pit. The protein localises to the cytoplasmic vesicle. Its function is as follows. Functions in regulating agonist-mediated G-protein coupled receptor (GPCR) signaling by mediating both receptor desensitization and resensitization processes. During homologous desensitization, beta-arrestins bind to the GPRK-phosphorylated receptor and sterically preclude its coupling to the cognate G-protein; the binding appears to require additional receptor determinants exposed only in the active receptor conformation. The beta-arrestins target many receptors for internalization by acting as endocytic adapters (CLASPs, clathrin-associated sorting proteins) and recruiting the GPRCs to the adapter protein 2 complex 2 (AP-2) in clathrin-coated pits (CCPs). However, the extent of beta-arrestin involvement appears to vary significantly depending on the receptor, agonist and cell type. Internalized arrestin-receptor complexes traffic to intracellular endosomes, where they remain uncoupled from G-proteins. Two different modes of arrestin-mediated internalization occur. Class A receptors, like ADRB2, OPRM1, ENDRA, D1AR and ADRA1B dissociate from beta-arrestin at or near the plasma membrane and undergo rapid recycling. Class B receptors, like AVPR2, AGTR1, NTSR1, TRHR and TACR1 internalize as a complex with arrestin and traffic with it to endosomal vesicles, presumably as desensitized receptors, for extended periods of time. Receptor resensitization then requires that receptor-bound arrestin is removed so that the receptor can be dephosphorylated and returned to the plasma membrane. Mediates endocytosis of CCR7 following ligation of CCL19 but not CCL21. Involved in internalization of P2RY1, P2RY4, P2RY6 and P2RY11 and ATP-stimulated internalization of P2RY2. Involved in phosphorylation-dependent internalization of OPRD1 and subsequent recycling or degradation. Involved in ubiquitination of IGF1R. Beta-arrestins function as multivalent adapter proteins that can switch the GPCR from a G-protein signaling mode that transmits short-lived signals from the plasma membrane via small molecule second messengers and ion channels to a beta-arrestin signaling mode that transmits a distinct set of signals that are initiated as the receptor internalizes and transits the intracellular compartment. Acts as a signaling scaffold for MAPK pathways such as MAPK1/3 (ERK1/2) and MAPK10 (JNK3). ERK1/2 and JNK3 activated by the beta-arrestin scaffold are largely excluded from the nucleus and confined to cytoplasmic locations such as endocytic vesicles, also called beta-arrestin signalosomes. Acts as a signaling scaffold for the AKT1 pathway. GPCRs for which the beta-arrestin-mediated signaling relies on both ARRB1 and ARRB2 (codependent regulation) include ADRB2, F2RL1 and PTH1R. For some GPCRs the beta-arrestin-mediated signaling relies on either ARRB1 or ARRB2 and is inhibited by the other respective beta-arrestin form (reciprocal regulation). Increases ERK1/2 signaling in AGTR1- and AVPR2-mediated activation (reciprocal regulation). Involved in CCR7-mediated ERK1/2 signaling involving ligand CCL19. Is involved in type-1A angiotensin II receptor/AGTR1-mediated ERK activity. Is involved in type-1A angiotensin II receptor/AGTR1-mediated MAPK10 activity. Is involved in dopamine-stimulated AKT1 activity in the striatum by disrupting the association of AKT1 with its negative regulator PP2A. Involved in AGTR1-mediated chemotaxis. Appears to function as signaling scaffold involved in regulation of MIP-1-beta-stimulated CCR5-dependent chemotaxis. Involved in attenuation of NF-kappa-B-dependent transcription in response to GPCR or cytokine stimulation by interacting with and stabilizing CHUK. Suppresses UV-induced NF-kappa-B-dependent activation by interacting with CHUK. The function is promoted by stimulation of ADRB2 and dephosphorylation of ARRB2. Involved in IL8-mediated granule release in neutrophils. Involved in p53/TP53-mediated apoptosis by regulating MDM2 and reducing the MDM2-mediated degradation of p53/TP53. May serve as nuclear messenger for GPCRs. Upon stimulation of OR1D2, may be involved in regulation of gene expression during the early processes of fertilization. Also involved in regulation of receptors other than GPCRs. Involved in endocytosis of TGFBR2 and TGFBR3 and down-regulates TGF-beta signaling such as NF-kappa-B activation. Involved in endocytosis of low-density lipoprotein receptor/LDLR. Involved in endocytosis of smoothened homolog/Smo, which also requires GRK2. Involved in endocytosis of SLC9A5. Involved in endocytosis of ENG and subsequent TGF-beta-mediated ERK activation and migration of epithelial cells. Involved in Toll-like receptor and IL-1 receptor signaling through the interaction with TRAF6 which prevents TRAF6 autoubiquitination and oligomerization required for activation of NF-kappa-B and JUN. Involved in insulin resistance by acting as insulin-induced signaling scaffold for SRC, AKT1 and INSR. Involved in regulation of inhibitory signaling of natural killer cells by recruiting PTPN6 and PTPN11 to KIR2DL1. Involved in the internalization of the atypical chemokine receptor ACKR3. Acts as an adapter protein coupling FFAR4 receptor to specific downstream signaling pathways, as well as mediating receptor endocytosis. During the activation step of NLRP3 inflammasome, directly associates with NLRP3 leading to inhibition of pro-inflammatory cytokine release and inhibition of inflammation. In Rattus norvegicus (Rat), this protein is Beta-arrestin-2 (Arrb2).